A 187-amino-acid polypeptide reads, in one-letter code: Threonylcarbamoyl-AMP synthase (187 aa).

The YrdC-like domain occupies 4 to 187 (TLTLSEAVTA…DARSGHILRL (184 aa)).

It belongs to the SUA5 family. TsaC subfamily.

Its subcellular location is the cytoplasm. It carries out the reaction L-threonine + hydrogencarbonate + ATP = L-threonylcarbamoyladenylate + diphosphate + H2O. In terms of biological role, required for the formation of a threonylcarbamoyl group on adenosine at position 37 (t(6)A37) in tRNAs that read codons beginning with adenine. Catalyzes the conversion of L-threonine, HCO(3)(-)/CO(2) and ATP to give threonylcarbamoyl-AMP (TC-AMP) as the acyladenylate intermediate, with the release of diphosphate. This Xylella fastidiosa (strain M12) protein is Threonylcarbamoyl-AMP synthase.